Consider the following 284-residue polypeptide: SF-assemblin (284 aa).

The disordered stretch occupies residues 1–30 (PTPSPEARVASRPFLDSPLPGSPRSGSPTG). The tract at residues 1–38 (PTPSPEARVASRPFLDSPLPGSPRSGSPTGYITATKAI) is nonhelical region. The span at 17–30 (SPLPGSPRSGSPTG) shows a compositional bias: low complexity. The interval 39-284 (SAGKLEHVAE…QDGLRIVNNS (246 aa)) is rod. Coiled coils occupy residues 56–102 (EIEL…QIQV) and 239–268 (LDEI…QAVN).

The protein belongs to the SF-assemblin family. Consists of at least four isoforms including two phosphorylated.

The protein localises to the cytoplasm. It is found in the cytoskeleton. Its function is as follows. Major component of the striated microtubule-associated fibers (SMAFs; system-I-fibers). This Spermatozopsis similis (Green alga) protein is SF-assemblin.